Consider the following 168-residue polypeptide: Small ribosomal subunit protein uS5 (168 aa).

One can recognise an S5 DRBM domain in the interval 14-77 (FEERVVSINR…EAAKKNLITV (64 aa)).

It belongs to the universal ribosomal protein uS5 family. In terms of assembly, part of the 30S ribosomal subunit. Contacts proteins S4 and S8.

In terms of biological role, with S4 and S12 plays an important role in translational accuracy. Its function is as follows. Located at the back of the 30S subunit body where it stabilizes the conformation of the head with respect to the body. The chain is Small ribosomal subunit protein uS5 from Lactococcus lactis subsp. lactis (strain IL1403) (Streptococcus lactis).